The sequence spans 364 residues: MLDTMRWTGDGLLELLDQTRLPFEKSYIKCTEYTDVAEAIKRLAVRGAPAIGAAAAYGLVLAARKIRANTKKEFLTELEARARELAATRPTAVNLHWALNRMLRKMRLAEPEDAGLLCDLLLEEAQAIFREDITGNRRMARYGLELIPEGARILTHCNAGALATAGYGTALGLVRAAHEAGRRVSVYAGETRPLLQGARLTAWEMLQEGIPVTLITDSMAGYLLAKGKADLVVVGADRIAANGDVANKIGTYSLAVLAREHKIPFYVAAPVSTIDLSLASGEEIPIEERDSSEVTHLAGRPVAPEGVNVWNPAFDVTPARLITAIITDRGIVKPPYDENLRKTVEGLNRNLVIELTAEDGKSNL.

Substrate is bound by residues 46 to 48 (RGA), Arg-89, and Gln-196. The Proton donor role is filled by Asp-237. 247-248 (NK) serves as a coordination point for substrate.

It belongs to the eIF-2B alpha/beta/delta subunits family. MtnA subfamily.

The catalysed reaction is 5-(methylsulfanyl)-alpha-D-ribose 1-phosphate = 5-(methylsulfanyl)-D-ribulose 1-phosphate. It functions in the pathway amino-acid biosynthesis; L-methionine biosynthesis via salvage pathway; L-methionine from S-methyl-5-thio-alpha-D-ribose 1-phosphate: step 1/6. Functionally, catalyzes the interconversion of methylthioribose-1-phosphate (MTR-1-P) into methylthioribulose-1-phosphate (MTRu-1-P). This Pelotomaculum thermopropionicum (strain DSM 13744 / JCM 10971 / SI) protein is Methylthioribose-1-phosphate isomerase.